A 312-amino-acid chain; its full sequence is Borealin-2 (312 aa).

Residues 1–10 (MPPRKAPAKR) are compositionally biased toward basic residues. The tract at residues 1 to 26 (MPPRKAPAKRRSTDSGVERDRGALSQ) is disordered. Residues 11–26 (RSTDSGVERDRGALSQ) are compositionally biased toward basic and acidic residues.

Belongs to the borealin family. As to quaternary structure, component of the CPC complex.

It localises to the nucleus. The protein resides in the chromosome. It is found in the centromere. In terms of biological role, component of the chromosomal passenger complex (CPC), a complex that acts as a key regulator of mitosis. The CPC complex has essential functions at the centromere in ensuring correct chromosome alignment and segregation and is required for chromatin-induced microtubule stabilization and spindle assembly. The protein is Borealin-2 of Gallus gallus (Chicken).